The primary structure comprises 496 residues: Probable cytosol aminopeptidase (496 aa).

Mn(2+) contacts are provided by K258 and D263. K270 is an active-site residue. Residues D281, D340, and E342 each contribute to the Mn(2+) site. R344 is an active-site residue.

It belongs to the peptidase M17 family. The cofactor is Mn(2+).

It localises to the cytoplasm. It catalyses the reaction Release of an N-terminal amino acid, Xaa-|-Yaa-, in which Xaa is preferably Leu, but may be other amino acids including Pro although not Arg or Lys, and Yaa may be Pro. Amino acid amides and methyl esters are also readily hydrolyzed, but rates on arylamides are exceedingly low.. It carries out the reaction Release of an N-terminal amino acid, preferentially leucine, but not glutamic or aspartic acids.. In terms of biological role, presumably involved in the processing and regular turnover of intracellular proteins. Catalyzes the removal of unsubstituted N-terminal amino acids from various peptides. This is Probable cytosol aminopeptidase from Helicobacter pylori (strain HPAG1).